The chain runs to 76 residues: ATP synthase subunit 9, mitochondrial (76 aa).

2 consecutive transmembrane segments (helical) span residues 14 to 34 (ISTI…AALI) and 56 to 76 (ALSE…LFAV).

Belongs to the ATPase C chain family. As to quaternary structure, F-type ATPases have 2 components, CF(1) - the catalytic core - and CF(0) - the membrane proton channel. CF(1) has five subunits: alpha(3), beta(3), gamma(1), delta(1), epsilon(1). CF(0) has three main subunits: a, b and c.

It is found in the mitochondrion membrane. Functionally, mitochondrial membrane ATP synthase (F(1)F(0) ATP synthase or Complex V) produces ATP from ADP in the presence of a proton gradient across the membrane which is generated by electron transport complexes of the respiratory chain. F-type ATPases consist of two structural domains, F(1) - containing the extramembraneous catalytic core and F(0) - containing the membrane proton channel, linked together by a central stalk and a peripheral stalk. During catalysis, ATP synthesis in the catalytic domain of F(1) is coupled via a rotary mechanism of the central stalk subunits to proton translocation. Part of the complex F(0) domain. A homomeric c-ring of probably 10 subunits is part of the complex rotary element. This chain is ATP synthase subunit 9, mitochondrial (ATP9), found in Candida glabrata (strain ATCC 2001 / BCRC 20586 / JCM 3761 / NBRC 0622 / NRRL Y-65 / CBS 138) (Yeast).